Consider the following 196-residue polypeptide: Thymidine kinase (196 aa).

ATP is bound by residues 9 to 16 (SAMNAGKS) and 88 to 91 (DEAQ). E89 acts as the Proton acceptor in catalysis. Residues C146, C148, C183, and H186 each contribute to the Zn(2+) site.

This sequence belongs to the thymidine kinase family. As to quaternary structure, homotetramer.

The protein resides in the cytoplasm. It catalyses the reaction thymidine + ATP = dTMP + ADP + H(+). In Coxiella burnetii (strain RSA 493 / Nine Mile phase I), this protein is Thymidine kinase.